The following is a 218-amino-acid chain: Small ribosomal subunit protein uS3c (218 aa).

The KH type-2 domain occupies 47–118 (VQKHMRISSG…RLNIAIARVP (72 aa)).

It belongs to the universal ribosomal protein uS3 family. As to quaternary structure, part of the 30S ribosomal subunit.

Its subcellular location is the plastid. It is found in the chloroplast. This Nuphar advena (Common spatterdock) protein is Small ribosomal subunit protein uS3c (rps3).